The chain runs to 177 residues: 3-isopropylmalate dehydratase small subunit 1 (177 aa).

Residues 157–177 (GRFPGEEPGAEASTETASAAE) are disordered. The span at 162 to 177 (EEPGAEASTETASAAE) shows a compositional bias: low complexity.

Belongs to the LeuD family. LeuD type 2 subfamily. In terms of assembly, heterodimer of LeuC and LeuD.

The catalysed reaction is (2R,3S)-3-isopropylmalate = (2S)-2-isopropylmalate. It functions in the pathway amino-acid biosynthesis; L-leucine biosynthesis; L-leucine from 3-methyl-2-oxobutanoate: step 2/4. Catalyzes the isomerization between 2-isopropylmalate and 3-isopropylmalate, via the formation of 2-isopropylmaleate. This is 3-isopropylmalate dehydratase small subunit 1 (leuD1) from Deinococcus radiodurans (strain ATCC 13939 / DSM 20539 / JCM 16871 / CCUG 27074 / LMG 4051 / NBRC 15346 / NCIMB 9279 / VKM B-1422 / R1).